We begin with the raw amino-acid sequence, 426 residues long: uncharacterized protein (426 aa).

3 Solcar repeats span residues 125 to 216, 226 to 315, and 334 to 422; these read KNNV…MKRV, HSPL…LKRT, and PNGL…CKKW. 6 helical membrane-spanning segments follow: residues 130-151, 193-213, 229-249, 290-310, 336-356, and 394-415; these read YFISGGIAGIVSRTCTAPLDRL, GINVLKVMPESSIKFGTYEAM, LYSYLAGGMAGSVAQMFIYPV, GVLVGILGMFPYSATDLGTFE, GLVMAFGALSGSTGATIVFPL, and LYKGLSPNLLKVAPSVAISYLV.

The protein belongs to the mitochondrial carrier (TC 2.A.29) family.

It is found in the mitochondrion inner membrane. This is an uncharacterized protein from Schizosaccharomyces pombe (strain 972 / ATCC 24843) (Fission yeast).